A 216-amino-acid chain; its full sequence is Ribosomal RNA small subunit methyltransferase G (216 aa).

Residues G81, L86, 132–133 (VE), and R147 contribute to the S-adenosyl-L-methionine site.

It belongs to the methyltransferase superfamily. RNA methyltransferase RsmG family.

It localises to the cytoplasm. The enzyme catalyses guanosine(527) in 16S rRNA + S-adenosyl-L-methionine = N(7)-methylguanosine(527) in 16S rRNA + S-adenosyl-L-homocysteine. Functionally, specifically methylates the N7 position of guanine in position 527 of 16S rRNA. This chain is Ribosomal RNA small subunit methyltransferase G, found in Hydrogenovibrio crunogenus (strain DSM 25203 / XCL-2) (Thiomicrospira crunogena).